Consider the following 179-residue polypeptide: ATP synthase subunit delta (179 aa).

The protein belongs to the ATPase delta chain family. In terms of assembly, F-type ATPases have 2 components, F(1) - the catalytic core - and F(0) - the membrane proton channel. F(1) has five subunits: alpha(3), beta(3), gamma(1), delta(1), epsilon(1). F(0) has three main subunits: a(1), b(2) and c(10-14). The alpha and beta chains form an alternating ring which encloses part of the gamma chain. F(1) is attached to F(0) by a central stalk formed by the gamma and epsilon chains, while a peripheral stalk is formed by the delta and b chains.

The protein resides in the cell inner membrane. Its function is as follows. F(1)F(0) ATP synthase produces ATP from ADP in the presence of a proton or sodium gradient. F-type ATPases consist of two structural domains, F(1) containing the extramembraneous catalytic core and F(0) containing the membrane proton channel, linked together by a central stalk and a peripheral stalk. During catalysis, ATP synthesis in the catalytic domain of F(1) is coupled via a rotary mechanism of the central stalk subunits to proton translocation. In terms of biological role, this protein is part of the stalk that links CF(0) to CF(1). It either transmits conformational changes from CF(0) to CF(1) or is implicated in proton conduction. This Burkholderia vietnamiensis (strain G4 / LMG 22486) (Burkholderia cepacia (strain R1808)) protein is ATP synthase subunit delta.